A 243-amino-acid polypeptide reads, in one-letter code: Leucyl/phenylalanyl-tRNA--protein transferase (243 aa).

It belongs to the L/F-transferase family.

The protein localises to the cytoplasm. The catalysed reaction is N-terminal L-lysyl-[protein] + L-leucyl-tRNA(Leu) = N-terminal L-leucyl-L-lysyl-[protein] + tRNA(Leu) + H(+). It carries out the reaction N-terminal L-arginyl-[protein] + L-leucyl-tRNA(Leu) = N-terminal L-leucyl-L-arginyl-[protein] + tRNA(Leu) + H(+). The enzyme catalyses L-phenylalanyl-tRNA(Phe) + an N-terminal L-alpha-aminoacyl-[protein] = an N-terminal L-phenylalanyl-L-alpha-aminoacyl-[protein] + tRNA(Phe). Its function is as follows. Functions in the N-end rule pathway of protein degradation where it conjugates Leu, Phe and, less efficiently, Met from aminoacyl-tRNAs to the N-termini of proteins containing an N-terminal arginine or lysine. The sequence is that of Leucyl/phenylalanyl-tRNA--protein transferase from Saccharophagus degradans (strain 2-40 / ATCC 43961 / DSM 17024).